Here is a 345-residue protein sequence, read N- to C-terminus: Anthranilate phosphoribosyltransferase (345 aa).

5-phospho-alpha-D-ribose 1-diphosphate contacts are provided by residues Gly-75, 78–79 (GD), Ser-83, 85–88 (NIST), 103–111 (KHGNRAASS), and Gly-115. An anthranilate-binding site is contributed by Gly-75. Ser-87 contributes to the Mg(2+) binding site. Asn-106 provides a ligand contact to anthranilate. Arg-161 is an anthranilate binding site. Asp-219 and Glu-220 together coordinate Mg(2+).

This sequence belongs to the anthranilate phosphoribosyltransferase family. In terms of assembly, homodimer. Mg(2+) is required as a cofactor.

The catalysed reaction is N-(5-phospho-beta-D-ribosyl)anthranilate + diphosphate = 5-phospho-alpha-D-ribose 1-diphosphate + anthranilate. It functions in the pathway amino-acid biosynthesis; L-tryptophan biosynthesis; L-tryptophan from chorismate: step 2/5. In terms of biological role, catalyzes the transfer of the phosphoribosyl group of 5-phosphorylribose-1-pyrophosphate (PRPP) to anthranilate to yield N-(5'-phosphoribosyl)-anthranilate (PRA). In Nocardia farcinica (strain IFM 10152), this protein is Anthranilate phosphoribosyltransferase.